We begin with the raw amino-acid sequence, 347 residues long: Heat-inducible transcription repressor HrcA (347 aa).

This sequence belongs to the HrcA family.

Its function is as follows. Negative regulator of class I heat shock genes (grpE-dnaK-dnaJ and groELS operons). Prevents heat-shock induction of these operons. This is Heat-inducible transcription repressor HrcA from Desulforamulus reducens (strain ATCC BAA-1160 / DSM 100696 / MI-1) (Desulfotomaculum reducens).